The chain runs to 193 residues: MSPLSIVLLGFAMSTDAFAAAIGKGAAMRRPRWRDAVRAGLVFGCIEAITPVIGWMLGRAASDYLAAFDHWIAFGLLGALGAHMIVAGLRNESEVDEALRDTPKRYGLLALAATGFATSIDAMAVGVSLAFLDVHIGVVAAVVGLCTLSMVTAGVMLGRALGALIGKRAEILGGVILILIGSTILYEHLSGAA.

6 helical membrane passes run Pro3–Gly23, Val37–Leu57, Ala66–Val86, Leu109–Phe131, Cys146–Gly166, and Ile171–Gly191.

It belongs to the MntP (TC 9.B.29) family.

It localises to the cell inner membrane. In terms of biological role, probably functions as a manganese efflux pump. The protein is Putative manganese efflux pump MntP of Xanthomonas campestris pv. campestris (strain 8004).